Consider the following 1100-residue polypeptide: Protein P2-P3 (1100 aa).

An N-terminal signal peptide occupies residues M1–A25. A run of 2 helical transmembrane segments spans residues A131–Y151 and A165–I185. One can recognise a Peptidase S39 domain in the interval V224–E416. Active-site for protease activity residues include H272, D304, and S373. 2 disordered regions span residues E463 to N493 and V530 to E601. Basic and acidic residues predominate over residues V530–K542. A compositionally biased stretch (basic residues) spans G550–R561. Positions S578–D595 are enriched in basic and acidic residues. Positions E897 to K1012 constitute a RdRp catalytic domain.

It belongs to the ssRNA positive-strand viruses RNA-directed RNA polymerase family.

The protein localises to the host membrane. The enzyme catalyses RNA(n) + a ribonucleoside 5'-triphosphate = RNA(n+1) + diphosphate. Functionally, precursor from which the RNA-dependent RNA polymerase (RdRp) is probably released. RNA-dependent RNA polymerase plays an essential role in virus replication (Potential). In terms of biological role, RNA-dependent RNA polymerase replicates the viral genome. The protein is Protein P2-P3 of Poinsettia latent virus (isolate Euphorbia pulcherrima/Germany/Siepen/2005) (PnLV).